A 101-amino-acid polypeptide reads, in one-letter code: Cell cycle protein GpsB (101 aa).

Residues 34 to 71 (LDMVIKDYETFNQEIEKLQQENLHLSKQLEEAVEQGKR) adopt a coiled-coil conformation.

It belongs to the GpsB family. In terms of assembly, forms polymers through the coiled coil domains. Interacts with PBP1, MreC and EzrA.

The protein resides in the cytoplasm. Functionally, divisome component that associates with the complex late in its assembly, after the Z-ring is formed, and is dependent on DivIC and PBP2B for its recruitment to the divisome. Together with EzrA, is a key component of the system that regulates PBP1 localization during cell cycle progression. Its main role could be the removal of PBP1 from the cell pole after pole maturation is completed. Also contributes to the recruitment of PBP1 to the division complex. Not essential for septum formation. This chain is Cell cycle protein GpsB, found in Bacillus pumilus (strain SAFR-032).